We begin with the raw amino-acid sequence, 835 residues long: Outer membrane usher protein FasD (835 aa).

An N-terminal signal peptide occupies residues 1-21 (MNKYPPLLTMLIIGIGSNAVA). Cysteine 810 and cysteine 834 are oxidised to a cystine.

The protein belongs to the fimbrial export usher family.

The protein localises to the cell outer membrane. Functionally, involved in the export and assembly of the 987P fimbriae subunits across the outer membrane. This is Outer membrane usher protein FasD (fasD) from Escherichia coli.